Here is a 151-residue protein sequence, read N- to C-terminus: 3-hydroxyacyl-[acyl-carrier-protein] dehydratase FabZ (151 aa).

Histidine 54 is a catalytic residue.

It belongs to the thioester dehydratase family. FabZ subfamily.

It is found in the cytoplasm. The catalysed reaction is a (3R)-hydroxyacyl-[ACP] = a (2E)-enoyl-[ACP] + H2O. In terms of biological role, involved in unsaturated fatty acids biosynthesis. Catalyzes the dehydration of short chain beta-hydroxyacyl-ACPs and long chain saturated and unsaturated beta-hydroxyacyl-ACPs. The protein is 3-hydroxyacyl-[acyl-carrier-protein] dehydratase FabZ of Buchnera aphidicola subsp. Acyrthosiphon pisum (strain 5A).